A 211-amino-acid chain; its full sequence is ATP-dependent Clp protease proteolytic subunit (211 aa).

The active-site Nucleophile is Ser114. His139 is an active-site residue.

Belongs to the peptidase S14 family. As to quaternary structure, fourteen ClpP subunits assemble into 2 heptameric rings which stack back to back to give a disk-like structure with a central cavity, resembling the structure of eukaryotic proteasomes.

Its subcellular location is the cytoplasm. The enzyme catalyses Hydrolysis of proteins to small peptides in the presence of ATP and magnesium. alpha-casein is the usual test substrate. In the absence of ATP, only oligopeptides shorter than five residues are hydrolyzed (such as succinyl-Leu-Tyr-|-NHMec, and Leu-Tyr-Leu-|-Tyr-Trp, in which cleavage of the -Tyr-|-Leu- and -Tyr-|-Trp bonds also occurs).. In terms of biological role, cleaves peptides in various proteins in a process that requires ATP hydrolysis. Has a chymotrypsin-like activity. Plays a major role in the degradation of misfolded proteins. This Pseudomonas fluorescens (strain Pf0-1) protein is ATP-dependent Clp protease proteolytic subunit.